Reading from the N-terminus, the 201-residue chain is Potassium-transporting ATPase KdpC subunit (201 aa).

The helical transmembrane segment at Ile13–Ile33 threads the bilayer.

The protein belongs to the KdpC family. In terms of assembly, the system is composed of three essential subunits: KdpA, KdpB and KdpC.

The protein resides in the cell membrane. Functionally, part of the high-affinity ATP-driven potassium transport (or Kdp) system, which catalyzes the hydrolysis of ATP coupled with the electrogenic transport of potassium into the cytoplasm. This subunit acts as a catalytic chaperone that increases the ATP-binding affinity of the ATP-hydrolyzing subunit KdpB by the formation of a transient KdpB/KdpC/ATP ternary complex. The chain is Potassium-transporting ATPase KdpC subunit from Clostridium botulinum (strain Eklund 17B / Type B).